We begin with the raw amino-acid sequence, 277 residues long: Type II restriction enzyme EcoRI (277 aa).

Catalysis depends on residues Asp91, Glu111, and Lys113. Mg(2+) is bound by residues Asp91 and Glu111.

The protein belongs to the EcoRI type II restriction endonuclease family. Homodimer. It depends on Mg(2+) as a cofactor.

It carries out the reaction Endonucleolytic cleavage of DNA to give specific double-stranded fragments with terminal 5'-phosphates.. In terms of biological role, a P subtype restriction enzyme that recognizes the double-stranded sequence 5'-GAATTC-3' and cleaves after G-1. This is Type II restriction enzyme EcoRI (ecoRIR) from Escherichia coli.